Consider the following 287-residue polypeptide: Rhodopsin (287 aa).

The Extracellular segment spans residues valine 1 to alanine 5. The helical transmembrane segment at tyrosine 6–valine 30 threads the bilayer. At threonine 31–asparagine 42 the chain is on the cytoplasmic side. Residues tyrosine 43 to tyrosine 65 form a helical membrane-spanning segment. Residues threonine 66 to cysteine 79 lie on the Extracellular side of the membrane. Cysteine 79 and cysteine 156 are oxidised to a cystine. A helical membrane pass occupies residues asparagine 80–valine 102. A 'Ionic lock' involved in activated form stabilization motif is present at residues glutamate 103–tryptophan 105. Residues glutamate 103–histidine 121 are Cytoplasmic-facing. A helical transmembrane segment spans residues alanine 122–valine 142. Residues glycine 143–serine 171 lie on the Extracellular side of the membrane. Asparagine 169 carries N-linked (GlcNAc...) asparagine glycosylation. The helical transmembrane segment at leucine 172–glycine 193 threads the bilayer. At arginine 194–arginine 221 the chain is on the cytoplasmic side. A helical transmembrane segment spans residues methionine 222–tyrosine 243. The Extracellular portion of the chain corresponds to isoleucine 244–valine 255. Residues phenylalanine 256 to cysteine 277 traverse the membrane as a helical segment. Lysine 265 is subject to N6-(retinylidene)lysine. At methionine 278 to isoleucine 287 the chain is on the cytoplasmic side.

This sequence belongs to the G-protein coupled receptor 1 family. Opsin subfamily. In terms of processing, phosphorylated on some or all of the serine and threonine residues present in the C-terminal region. Post-translationally, contains one covalently linked retinal chromophore.

The protein resides in the membrane. Its subcellular location is the cell projection. It is found in the cilium. The protein localises to the photoreceptor outer segment. Functionally, photoreceptor required for image-forming vision at low light intensity. While most salt water fish species use retinal as chromophore, most freshwater fish use 3-dehydroretinal, or a mixture of retinal and 3-dehydroretinal. Light-induced isomerization of 11-cis to all-trans retinal triggers a conformational change that activates signaling via G-proteins. Subsequent receptor phosphorylation mediates displacement of the bound G-protein alpha subunit by arrestin and terminates signaling. This Taurulus bubalis (Long-spined sea scorpion) protein is Rhodopsin (rho).